The sequence spans 701 residues: MSGDKPVEALSEAEAAAELERLARAIADADAAYYQNDAPELTDADYDALRQRNLAIEARFPALKREDSPTDRVGAEAGDGFAKARHSAPMLSLDNAFTDEDVADFAVRIRRFLGLAPEETLAFTAEPKIDGLSLSLTYENGKLMRAATRGDGQTGEDVTANARTLGDIPVKLKGKGWPERIEVRGEVYMAKSAFADLNAREAEAGRKVFANPRNAAAGSLRQLDVEITKSRPLRFFAYAWAAASEPFAQTQFEAVKAFADWGFVTNSRMIRIKTVEEVLSYYQEIEAERASLEYDIDGVVYKVDRLDWQQRLGFVSRAPRWAIAHKFPAEKAVTTLLGIDIQVGRTGSLTPVARLEPVTVGGVVVSNATLHNEDEIARLGVKPGDKVEIQRAGDVIPQVLRVVEPGQGAPWAMPDTCPVCGSAAVREIDDAGRADVRRRCTGGLICPAQAVERLKHFVSRKALDIDGLGEKQVLLFHEKGAVKAPQDIFRLKKNIEAAGLPPLEEWEGFGAQSARKLYSAIDARRKVPFARFLNGLGIRYVGQTTSAQFARSFLSWQSFWAAVKAAEEGGIESEAYNELIGIDGIGQAAARSLMAFEGEPHNREMLAALLEEVEVEDEIPAETGSPVTGKTVVFTGTLEKMTRDEAKARASALGAKVAGTVSAKTDIVIAGPGAGSKLVKAEQLGLAVMTEDEWLALIGET.

NAD(+) is bound by residues 43–47, 92–93, and E126; these read DADYD and SL. Residue K128 is the N6-AMP-lysine intermediate of the active site. Residues R149, E186, K302, and K326 each contribute to the NAD(+) site. Positions 417, 420, 440, and 446 each coordinate Zn(2+). Positions 622 to 701 constitute a BRCT domain; it reads ETGSPVTGKT…DEWLALIGET (80 aa).

Belongs to the NAD-dependent DNA ligase family. LigA subfamily. Mg(2+) is required as a cofactor. Requires Mn(2+) as cofactor.

The enzyme catalyses NAD(+) + (deoxyribonucleotide)n-3'-hydroxyl + 5'-phospho-(deoxyribonucleotide)m = (deoxyribonucleotide)n+m + AMP + beta-nicotinamide D-nucleotide.. DNA ligase that catalyzes the formation of phosphodiester linkages between 5'-phosphoryl and 3'-hydroxyl groups in double-stranded DNA using NAD as a coenzyme and as the energy source for the reaction. It is essential for DNA replication and repair of damaged DNA. In Hyphomonas neptunium (strain ATCC 15444), this protein is DNA ligase.